The sequence spans 252 residues: tRNA pseudouridine synthase A (252 aa).

The Nucleophile role is filled by Asp-54. Position 112 (Tyr-112) interacts with substrate.

It belongs to the tRNA pseudouridine synthase TruA family. In terms of assembly, homodimer.

It catalyses the reaction uridine(38/39/40) in tRNA = pseudouridine(38/39/40) in tRNA. In terms of biological role, formation of pseudouridine at positions 38, 39 and 40 in the anticodon stem and loop of transfer RNAs. The protein is tRNA pseudouridine synthase A of Oenococcus oeni (strain ATCC BAA-331 / PSU-1).